A 490-amino-acid chain; its full sequence is Proline--tRNA ligase (490 aa).

The protein belongs to the class-II aminoacyl-tRNA synthetase family. ProS type 3 subfamily. As to quaternary structure, homodimer.

It is found in the cytoplasm. The catalysed reaction is tRNA(Pro) + L-proline + ATP = L-prolyl-tRNA(Pro) + AMP + diphosphate. Catalyzes the attachment of proline to tRNA(Pro) in a two-step reaction: proline is first activated by ATP to form Pro-AMP and then transferred to the acceptor end of tRNA(Pro). The polypeptide is Proline--tRNA ligase (Salinibacter ruber (strain DSM 13855 / M31)).